The primary structure comprises 56 residues: Large ribosomal subunit protein bL32 (56 aa).

Residues Met1–Val27 form a disordered region. Over residues Lys7–Arg16 the composition is skewed to basic residues.

It belongs to the bacterial ribosomal protein bL32 family.

The protein is Large ribosomal subunit protein bL32 of Actinobacillus pleuropneumoniae serotype 7 (strain AP76).